A 272-amino-acid chain; its full sequence is F-actin-capping protein subunit beta (272 aa).

The residue at position 2 (Ser2) is an N-acetylserine. At Ser2 the chain carries Phosphoserine. An N6-acetyllysine modification is found at Lys235. At Val263 the chain carries Phosphoserine.

The protein belongs to the F-actin-capping protein beta subunit family. As to quaternary structure, component of the F-actin capping complex, composed of a heterodimer of an alpha and a beta subunit. Subunit of dynactin, a multiprotein complex part of a tripartite complex with dynein and a adapter, such as BICDL1, BICD2 or HOOK3. The dynactin complex is built around ACTR1A/ACTB filament and consists of an actin-related filament composed of a shoulder domain, a pointed end and a barbed end. Its length is defined by its flexible shoulder domain. The soulder is composed of 2 DCTN1 subunits, 4 DCTN2 and 2 DCTN3. The 4 DCNT2 (via N-terminus) bind the ACTR1A filament and act as molecular rulers to determine the length. The pointed end is important for binding dynein-dynactin cargo adapters. Consists of 4 subunits: ACTR10, DCNT4, DCTN5 and DCTN6. The barbed end is composed of a CAPZA1:CAPZB heterodimers, which binds ACTR1A/ACTB filament and dynactin and stabilizes dynactin. Interacts with ARHGAP17. Interaction with RCSD1/CAPZIP. Component of the WASH complex, composed of F-actin-capping protein subunit alpha (CAPZA1, CAPZA2 or CAPZA3), F-actin-capping protein subunit beta (CAPZB), WASH (WASHC1, WASH2P, WASH3P, WASH4P, WASH5P or WASH6P), WASHC2 (WASHC2A or WASHC2C), WASHC3, WASHC4 and WASHC5. Interacts with ACTG1. Directly interacts with CRACD; this interaction decreases binding to actin.

The protein resides in the cytoplasm. It is found in the cytoskeleton. The protein localises to the myofibril. It localises to the sarcomere. F-actin-capping proteins bind in a Ca(2+)-independent manner to the fast growing ends of actin filaments (barbed end) thereby blocking the exchange of subunits at these ends. Unlike other capping proteins (such as gelsolin and severin), these proteins do not sever actin filaments. Plays a role in the regulation of cell morphology and cytoskeletal organization. Forms, with CAPZB, the barbed end of the fast growing ends of actin filaments in the dynactin complex and stabilizes dynactin structure. The dynactin multiprotein complex activates the molecular motor dynein for ultra-processive transport along microtubules. The polypeptide is F-actin-capping protein subunit beta (Homo sapiens (Human)).